The sequence spans 363 residues: Heat-inducible transcription repressor HrcA (363 aa).

This sequence belongs to the HrcA family.

In terms of biological role, negative regulator of class I heat shock genes (grpE-dnaK-dnaJ and groELS operons). Prevents heat-shock induction of these operons. This Rhizobium radiobacter (Agrobacterium tumefaciens) protein is Heat-inducible transcription repressor HrcA.